The sequence spans 163 residues: Phosphopantetheine adenylyltransferase (163 aa).

Ser-8 serves as a coordination point for substrate. Residues 8–9 (SF) and His-16 contribute to the ATP site. The substrate site is built by Lys-40, Thr-72, and Arg-86. ATP-binding positions include 87–89 (GLR), Glu-97, and 122–128 (HSFLSSS).

Belongs to the bacterial CoaD family. In terms of assembly, homohexamer. It depends on Mg(2+) as a cofactor.

It is found in the cytoplasm. It carries out the reaction (R)-4'-phosphopantetheine + ATP + H(+) = 3'-dephospho-CoA + diphosphate. It functions in the pathway cofactor biosynthesis; coenzyme A biosynthesis; CoA from (R)-pantothenate: step 4/5. Reversibly transfers an adenylyl group from ATP to 4'-phosphopantetheine, yielding dephospho-CoA (dPCoA) and pyrophosphate. This chain is Phosphopantetheine adenylyltransferase, found in Parasynechococcus marenigrum (strain WH8102).